The chain runs to 138 residues: Small ribosomal subunit protein uS11c (138 aa).

Positions 1–23 (MAKTIPRIGSRKNGRIGSRKNTR) are disordered. Over residues 9–23 (GSRKNGRIGSRKNTR) the composition is skewed to basic residues.

This sequence belongs to the universal ribosomal protein uS11 family. Part of the 30S ribosomal subunit.

Its subcellular location is the plastid. It is found in the chloroplast. This chain is Small ribosomal subunit protein uS11c, found in Daucus carota (Wild carrot).